The following is a 1997-amino-acid chain: Otoferlin (1997 aa).

In terms of domain architecture, C2 1 spans 1 to 98 (MALIVHLKTV…VEENRVEVTD (98 aa)). The Cytoplasmic portion of the chain corresponds to 1-1963 (MALIVHLKTV…ARYFLWHTYR (1963 aa)). Residues 140–167 (QEEKDSQETDGLLPGSRPSTRISGEKSF) are disordered. 2 consecutive C2 domains span residues 235 to 356 (KRSK…HKWA) and 399 to 530 (IEGN…FLPT). A disordered region spans residues 643-692 (VDGMSRPLRPRPRKEPGDEEEVDLIQNSSDDEGDEAGDLASVSSTPPMRP). The span at 659–679 (GDEEEVDLIQNSSDDEGDEAG) shows a compositional bias: acidic residues. Positions 791 to 820 (RERLKSCMRELESMGQQAKSLRAQVKRHTV) form a coiled coil. 2 consecutive C2 domains span residues 943–1068 (LHSF…PPRF) and 1115–1241 (RGPI…PNWN). 5 residues coordinate Ca(2+): D975, D981, D1037, D1039, and D1045. 3 disordered regions span residues 1253–1272 (LRNG…SMEP), 1296–1326 (DVAE…ESML), and 1343–1402 (LRQH…EKKK). Acidic residues-rich tracts occupy residues 1314–1325 (EEPEEEEPDESM) and 1352–1361 (DLEEKEEMES). Residues 1370-1383 (KSKEKSRAAKEEKK) are compositionally biased toward basic and acidic residues. 2 consecutive C2 domains span residues 1464–1593 (LPED…ATCG) and 1714–1865 (DMPA…KQCT). Ca(2+)-binding residues include D1508, D1514, D1563, D1565, D1571, D1836, S1839, and D1842. A helical membrane pass occupies residues 1964–1984 (WLLLKFLLLFLLLLLFALFLY). At 1985-1997 (SLPGYLAKKILGA) the chain is on the extracellular side.

This sequence belongs to the ferlin family. Interacts with SNAP25; the interaction is direct. Interacts with STX1; the interaction is direct. Interacts with RAB8B. Ca(2+) is required as a cofactor. As to expression, isoform 1 is expressed in cochlea and brain. Expressed in the cochlear and vestibular hair cells. Expressed in both inner and outer hair cells (IHCs and OHCs) and cochlear ganglions neurons at postnatal day 2 (P2) and 6 (P6). Expressed only in IHCs at postnatal day 60 (P60) (at protein level). Strongly expressed in brain and inner ear. In the inner ear, it is mainly expressed in the cochlear IHC and vestibular type I sensory hair cells. Weakly expressed in eye, heart, skeletal muscle, liver, kidney, lung and testis.

The protein resides in the cytoplasmic vesicle. The protein localises to the secretory vesicle. Its subcellular location is the synaptic vesicle membrane. It is found in the basolateral cell membrane. It localises to the endoplasmic reticulum membrane. The protein resides in the golgi apparatus membrane. The protein localises to the presynaptic cell membrane. Its subcellular location is the cell membrane. Its function is as follows. Key calcium ion sensor involved in the Ca(2+)-triggered synaptic vesicle-plasma membrane fusion and in the control of neurotransmitter release at these output synapses. Interacts in a calcium-dependent manner to the presynaptic SNARE proteins at ribbon synapses of cochlear inner hair cells (IHCs) to trigger exocytosis of neurotransmitter. Also essential to synaptic exocytosis in immature outer hair cells (OHCs). May also play a role within the recycling of endosomes. This is Otoferlin (Otof) from Mus musculus (Mouse).